Here is a 298-residue protein sequence, read N- to C-terminus: dTDP-4-dehydrorhamnose reductase (298 aa).

NADH contacts are provided by residues 10-12 (GQV), 35-36 (DL), and 59-61 (AYT). Residues 11 to 12 (QV), 35 to 36 (DL), 59 to 61 (AYT), and Tyr98 each bind NADPH. Residue 100 to 101 (TD) coordinates dTDP-beta-L-rhamnose. Residues Tyr124 and Lys128 each contribute to the NADH site. Residues Tyr124 and Lys128 each contribute to the NADPH site. The active-site Proton donor/acceptor is Tyr124. Trp149 lines the dTDP-beta-L-rhamnose pocket.

This sequence belongs to the dTDP-4-dehydrorhamnose reductase family. Homodimer. Requires Mg(2+) as cofactor.

It carries out the reaction dTDP-beta-L-rhamnose + NADP(+) = dTDP-4-dehydro-beta-L-rhamnose + NADPH + H(+). Its pathway is carbohydrate biosynthesis; dTDP-L-rhamnose biosynthesis. The protein operates within bacterial outer membrane biogenesis; LPS O-antigen biosynthesis. In terms of biological role, involved in the biosynthesis of the dTDP-L-rhamnose which is an important component of lipopolysaccharide (LPS). Catalyzes the reduction of dTDP-6-deoxy-L-lyxo-4-hexulose to yield dTDP-L-rhamnose. The polypeptide is dTDP-4-dehydrorhamnose reductase (Burkholderia thailandensis (strain ATCC 700388 / DSM 13276 / CCUG 48851 / CIP 106301 / E264)).